The following is a 158-amino-acid chain: 2-C-methyl-D-erythritol 2,4-cyclodiphosphate synthase (158 aa).

Asp-9 and His-11 together coordinate a divalent metal cation. 4-CDP-2-C-methyl-D-erythritol 2-phosphate-binding positions include 9-11 (DVH) and 35-36 (HS). His-43 is an a divalent metal cation binding site. 4-CDP-2-C-methyl-D-erythritol 2-phosphate-binding positions include 57-59 (DIG), 62-66 (FPDTD), 101-107 (AQKPKMA), 133-136 (TTTE), Phe-140, and Arg-143.

It belongs to the IspF family. Homotrimer. The cofactor is a divalent metal cation.

It carries out the reaction 4-CDP-2-C-methyl-D-erythritol 2-phosphate = 2-C-methyl-D-erythritol 2,4-cyclic diphosphate + CMP. The protein operates within isoprenoid biosynthesis; isopentenyl diphosphate biosynthesis via DXP pathway; isopentenyl diphosphate from 1-deoxy-D-xylulose 5-phosphate: step 4/6. In terms of biological role, involved in the biosynthesis of isopentenyl diphosphate (IPP) and dimethylallyl diphosphate (DMAPP), two major building blocks of isoprenoid compounds. Catalyzes the conversion of 4-diphosphocytidyl-2-C-methyl-D-erythritol 2-phosphate (CDP-ME2P) to 2-C-methyl-D-erythritol 2,4-cyclodiphosphate (ME-CPP) with a corresponding release of cytidine 5-monophosphate (CMP). This chain is 2-C-methyl-D-erythritol 2,4-cyclodiphosphate synthase, found in Bacillus cereus (strain ATCC 10987 / NRS 248).